Consider the following 376-residue polypeptide: D-alanine--D-alanine ligase (376 aa).

The ATP-grasp domain occupies 155–361; that stretch reads KIIFEKAGIP…YPELIEKLID (207 aa). 188-243 contacts ATP; it reads EEKFSYPVFVKPSNAGSSVGVSKAHDKNELKEALIYAARYDRKVLIEEFINGREVE. Aspartate 314, glutamate 328, and asparagine 330 together coordinate Mg(2+).

Belongs to the D-alanine--D-alanine ligase family. Requires Mg(2+) as cofactor. Mn(2+) serves as cofactor.

The protein localises to the cytoplasm. It carries out the reaction 2 D-alanine + ATP = D-alanyl-D-alanine + ADP + phosphate + H(+). It functions in the pathway cell wall biogenesis; peptidoglycan biosynthesis. In terms of biological role, cell wall formation. This Acetivibrio thermocellus (strain ATCC 27405 / DSM 1237 / JCM 9322 / NBRC 103400 / NCIMB 10682 / NRRL B-4536 / VPI 7372) (Clostridium thermocellum) protein is D-alanine--D-alanine ligase.